A 628-amino-acid polypeptide reads, in one-letter code: Protein ETHYLENE INSENSITIVE 3 (628 aa).

The stretch at 38–68 forms a coiled coil; that stretch reads EDDYTDDEIDVDELERRMWRDKMRLKRLKEQ. The span at 66-79 shows a compositional bias: basic and acidic residues; that stretch reads KEQDKGKEGVDAAK. Residues 66-92 are disordered; the sequence is KEQDKGKEGVDAAKQRQSQEQARRKKM. A DNA-binding domain region spans residues 174–306; it reads TPHTLQELQD…SLARELYPES (133 aa).

It belongs to the EIN3 family. In terms of assembly, acts as a homodimer to bind the primary ethylene response element. Interacts with TAF12B. Interacts with KIN10. Binds to ENAP1 in the presence of ethylene; this reaction facilitates its association with histone. Post-translationally, phosphorylated by KIN10.

It localises to the nucleus. Activated by phosphorylation by MPK3 and MPK6. Down-regulated by KIN10 that controls its protein stability under a phosphorylation-dependent manner. Satnilitzed during hypoxia (e.g. submergences) via a ceramides-triggered and CTR1-dependent manner. Functionally, transcription factor acting as a positive regulator in the ethylene response pathway, by promoting histone acetylation in an ENAP1-dependent manner, thus accelerating the expression of ethylene-responsive genes. Binds DNA. Is required for ethylene responsiveness in adult plant tissues. Binds a primary ethylene response element present in the ETHYLENE-RESPONSE-FACTOR1 promoter with consequence to activate the transcription of this gene. The sequence is that of Protein ETHYLENE INSENSITIVE 3 from Arabidopsis thaliana (Mouse-ear cress).